Here is a 229-residue protein sequence, read N- to C-terminus: Cytidylate kinase (229 aa).

10–18 (GFSSCGKST) contacts ATP.

Belongs to the cytidylate kinase family. Type 1 subfamily.

The protein resides in the cytoplasm. The enzyme catalyses CMP + ATP = CDP + ADP. The catalysed reaction is dCMP + ATP = dCDP + ADP. This chain is Cytidylate kinase, found in Bacteroides fragilis (strain ATCC 25285 / DSM 2151 / CCUG 4856 / JCM 11019 / LMG 10263 / NCTC 9343 / Onslow / VPI 2553 / EN-2).